The chain runs to 232 residues: Putative N-acetylmannosamine-6-phosphate 2-epimerase (232 aa).

This sequence belongs to the NanE family.

It carries out the reaction an N-acyl-D-glucosamine 6-phosphate = an N-acyl-D-mannosamine 6-phosphate. It participates in amino-sugar metabolism; N-acetylneuraminate degradation; D-fructose 6-phosphate from N-acetylneuraminate: step 3/5. Converts N-acetylmannosamine-6-phosphate (ManNAc-6-P) to N-acetylglucosamine-6-phosphate (GlcNAc-6-P). The chain is Putative N-acetylmannosamine-6-phosphate 2-epimerase from Borrelia garinii subsp. bavariensis (strain ATCC BAA-2496 / DSM 23469 / PBi) (Borreliella bavariensis).